The following is a 546-amino-acid chain: Chaperonin GroEL (546 aa).

Residues 30–33 (TLGP), Lys-51, 87–91 (DGTTT), Gly-415, 479–481 (NAA), and Asp-495 contribute to the ATP site.

The protein belongs to the chaperonin (HSP60) family. Forms a cylinder of 14 subunits composed of two heptameric rings stacked back-to-back. Interacts with the co-chaperonin GroES.

The protein resides in the cytoplasm. The enzyme catalyses ATP + H2O + a folded polypeptide = ADP + phosphate + an unfolded polypeptide.. Its function is as follows. Together with its co-chaperonin GroES, plays an essential role in assisting protein folding. The GroEL-GroES system forms a nano-cage that allows encapsulation of the non-native substrate proteins and provides a physical environment optimized to promote and accelerate protein folding. In Pseudomonas putida (strain ATCC 47054 / DSM 6125 / CFBP 8728 / NCIMB 11950 / KT2440), this protein is Chaperonin GroEL.